The primary structure comprises 717 residues: Fatty acid oxidation complex subunit alpha (717 aa).

The enoyl-CoA hydratase/isomerase stretch occupies residues 1–189 (MIYQSPTIEV…KVGAIDAVVA (189 aa)). Asp296 contacts substrate. The tract at residues 311 to 717 (KKVNSAAVLG…ANNGSYYQQA (407 aa)) is 3-hydroxyacyl-CoA dehydrogenase. Residues Met324, Asp343, 400–402 (VVE), Lys407, and Ser429 each bind NAD(+). The For 3-hydroxyacyl-CoA dehydrogenase activity role is filled by His450. NAD(+) is bound at residue Asn453. Residues Asn500 and Tyr660 each coordinate substrate.

In the N-terminal section; belongs to the enoyl-CoA hydratase/isomerase family. The protein in the C-terminal section; belongs to the 3-hydroxyacyl-CoA dehydrogenase family. As to quaternary structure, heterotetramer of two alpha chains (FadB) and two beta chains (FadA).

The enzyme catalyses a (3S)-3-hydroxyacyl-CoA + NAD(+) = a 3-oxoacyl-CoA + NADH + H(+). The catalysed reaction is a (3S)-3-hydroxyacyl-CoA = a (2E)-enoyl-CoA + H2O. It catalyses the reaction a 4-saturated-(3S)-3-hydroxyacyl-CoA = a (3E)-enoyl-CoA + H2O. It carries out the reaction (3S)-3-hydroxybutanoyl-CoA = (3R)-3-hydroxybutanoyl-CoA. The enzyme catalyses a (3Z)-enoyl-CoA = a 4-saturated (2E)-enoyl-CoA. The catalysed reaction is a (3E)-enoyl-CoA = a 4-saturated (2E)-enoyl-CoA. It functions in the pathway lipid metabolism; fatty acid beta-oxidation. Involved in the aerobic and anaerobic degradation of long-chain fatty acids via beta-oxidation cycle. Catalyzes the formation of 3-oxoacyl-CoA from enoyl-CoA via L-3-hydroxyacyl-CoA. It can also use D-3-hydroxyacyl-CoA and cis-3-enoyl-CoA as substrate. The sequence is that of Fatty acid oxidation complex subunit alpha from Shewanella halifaxensis (strain HAW-EB4).